Consider the following 88-residue polypeptide: UPF0223 protein RBAM_014500 (88 aa).

This sequence belongs to the UPF0223 family.

The chain is UPF0223 protein RBAM_014500 from Bacillus velezensis (strain DSM 23117 / BGSC 10A6 / LMG 26770 / FZB42) (Bacillus amyloliquefaciens subsp. plantarum).